Here is a 96-residue protein sequence, read N- to C-terminus: Large ribosomal subunit protein uL23 (96 aa).

It belongs to the universal ribosomal protein uL23 family. Part of the 50S ribosomal subunit. Contacts protein L29, and trigger factor when it is bound to the ribosome.

Functionally, one of the early assembly proteins it binds 23S rRNA. One of the proteins that surrounds the polypeptide exit tunnel on the outside of the ribosome. Forms the main docking site for trigger factor binding to the ribosome. In Clostridium novyi (strain NT), this protein is Large ribosomal subunit protein uL23.